A 236-amino-acid polypeptide reads, in one-letter code: Small ribosomal subunit protein uS2c (236 aa).

It belongs to the universal ribosomal protein uS2 family.

The protein localises to the plastid. It localises to the chloroplast. This chain is Small ribosomal subunit protein uS2c (rps2), found in Agrostis stolonifera (Creeping bentgrass).